A 169-amino-acid chain; its full sequence is Peptide deformylase (169 aa).

The Fe cation site is built by C93 and H135. E136 is a catalytic residue. H139 lines the Fe cation pocket.

Belongs to the polypeptide deformylase family. Requires Fe(2+) as cofactor.

It carries out the reaction N-terminal N-formyl-L-methionyl-[peptide] + H2O = N-terminal L-methionyl-[peptide] + formate. Functionally, removes the formyl group from the N-terminal Met of newly synthesized proteins. Requires at least a dipeptide for an efficient rate of reaction. N-terminal L-methionine is a prerequisite for activity but the enzyme has broad specificity at other positions. The protein is Peptide deformylase of Aquifex aeolicus (strain VF5).